The primary structure comprises 383 residues: Anhydro-N-acetylmuramic acid kinase (383 aa).

ATP is bound at residue 9–16 (GTSVDSID).

It belongs to the anhydro-N-acetylmuramic acid kinase family.

It catalyses the reaction 1,6-anhydro-N-acetyl-beta-muramate + ATP + H2O = N-acetyl-D-muramate 6-phosphate + ADP + H(+). It functions in the pathway amino-sugar metabolism; 1,6-anhydro-N-acetylmuramate degradation. It participates in cell wall biogenesis; peptidoglycan recycling. Its function is as follows. Catalyzes the specific phosphorylation of 1,6-anhydro-N-acetylmuramic acid (anhMurNAc) with the simultaneous cleavage of the 1,6-anhydro ring, generating MurNAc-6-P. Is required for the utilization of anhMurNAc either imported from the medium or derived from its own cell wall murein, and thus plays a role in cell wall recycling. The sequence is that of Anhydro-N-acetylmuramic acid kinase from Crocosphaera subtropica (strain ATCC 51142 / BH68) (Cyanothece sp. (strain ATCC 51142)).